The primary structure comprises 621 residues: Protein Tra (621 aa).

The helical transmembrane segment at 126 to 146 (GAWPVAGSLALIAANVAALVI) threads the bilayer. The FtsK domain occupies 275 to 465 (GEPVQVPLGR…LALSTSGESR (191 aa)). 290–297 (GTSGSGKS) is a binding site for ATP. The helical transmembrane segment at 564-584 (VAAAIGTGATTVADVATVTGI) threads the bilayer.

Its subcellular location is the cell membrane. Its function is as follows. Major protein required for plasmid transfer. The chain is Protein Tra (tra) from Streptomyces lividans.